We begin with the raw amino-acid sequence, 224 residues long: Charged multivesicular body protein 4b (224 aa).

The tract at residues methionine 1–glutamine 23 is disordered. Residue serine 2 is modified to N-acetylserine. The interval serine 2–valine 153 is intramolecular interaction with C-terminus. Lysine 6 carries the post-translational modification N6-acetyllysine. Over residues phenylalanine 8–glycine 19 the composition is skewed to gly residues. Residues glutamine 23 to isoleucine 183 adopt a coiled-coil conformation. Lysine 114 is modified (N6-acetyllysine). The intramolecular interaction with N-terminus stretch occupies residues glycine 154–methionine 224. Phosphoserine occurs at positions 184 and 223. Residues glycine 185–methionine 224 are disordered.

This sequence belongs to the SNF7 family. Probable core component of the endosomal sorting required for transport complex III (ESCRT-III). ESCRT-III components are thought to multimerize to form a flat lattice on the perimeter membrane of the endosome. Several assembly forms of ESCRT-III may exist that interact and act sequentially. Interacts with CHMP6 and CHMP4C. Interacts with PDCD6IP; the interaction is direct. Interacts with VPS4A; the interaction is direct. Interacts with VPS4B; the interaction is direct. Interacts with CHMP7. Interacts with CFTR; the interaction requires misfolded CFTR. Interacts with PTPN23. Interacts with CC2D1B. In terms of processing, ISGylated. Isgylation weakens its interaction with VPS4A.

Its subcellular location is the cytoplasm. It localises to the cytosol. The protein localises to the late endosome membrane. The protein resides in the midbody. It is found in the nucleus envelope. Its function is as follows. Probable core component of the endosomal sorting required for transport complex III (ESCRT-III) which is involved in multivesicular bodies (MVBs) formation and sorting of endosomal cargo proteins into MVBs. MVBs contain intraluminal vesicles (ILVs) that are generated by invagination and scission from the limiting membrane of the endosome and mostly are delivered to lysosomes enabling degradation of membrane proteins, such as stimulated growth factor receptors, lysosomal enzymes and lipids. The MVB pathway appears to require the sequential function of ESCRT-O, -I,-II and -III complexes. ESCRT-III proteins mostly dissociate from the invaginating membrane before the ILV is released. The ESCRT machinery also functions in topologically equivalent membrane fission events, such as the terminal stages of cytokinesis. Together with SPAST, the ESCRT-III complex promotes nuclear envelope sealing and mitotic spindle disassembly during late anaphase. Plays a role in the endosomal sorting pathway. ESCRT-III proteins are believed to mediate the necessary vesicle extrusion and/or membrane fission activities, possibly in conjunction with the AAA ATPase VPS4. When overexpressed, membrane-assembled circular arrays of CHMP4B filaments can promote or stabilize negative curvature and outward budding. CHMP4A/B/C are required for the exosomal release of SDCBP, CD63 and syndecan. Majority of the protein exists in a folded closed conformation. In Mus musculus (Mouse), this protein is Charged multivesicular body protein 4b (Chmp4b).